We begin with the raw amino-acid sequence, 279 residues long: HTH-type transcriptional activator RhaS (279 aa).

One can recognise an HTH araC/xylS-type domain in the interval 175-273 (QALLGWLQNN…SQAPKSLRHQ (99 aa)). 2 DNA-binding regions (H-T-H motif) span residues 192–213 (GGLA…KQHT) and 240–263 (ITTI…RKAF).

As to quaternary structure, binds DNA as a dimer.

It localises to the cytoplasm. In terms of biological role, activates expression of the rhaBAD and rhaT operons. This is HTH-type transcriptional activator RhaS from Pectobacterium atrosepticum (strain SCRI 1043 / ATCC BAA-672) (Erwinia carotovora subsp. atroseptica).